The chain runs to 349 residues: tRNA pseudouridine synthase D (349 aa).

F27 provides a ligand contact to substrate. D80 (nucleophile) is an active-site residue. N129 provides a ligand contact to substrate. The TRUD domain maps to 155–303 (GVPNYFGAQR…VEASRRAMLL (149 aa)). F329 serves as a coordination point for substrate.

This sequence belongs to the pseudouridine synthase TruD family.

It carries out the reaction uridine(13) in tRNA = pseudouridine(13) in tRNA. In terms of biological role, responsible for synthesis of pseudouridine from uracil-13 in transfer RNAs. The chain is tRNA pseudouridine synthase D from Salmonella dublin (strain CT_02021853).